Consider the following 384-residue polypeptide: Ribosomal RNA large subunit methyltransferase G (384 aa).

The protein belongs to the methyltransferase superfamily. RlmG family.

It localises to the cytoplasm. The enzyme catalyses guanosine(1835) in 23S rRNA + S-adenosyl-L-methionine = N(2)-methylguanosine(1835) in 23S rRNA + S-adenosyl-L-homocysteine + H(+). Its function is as follows. Specifically methylates the guanine in position 1835 (m2G1835) of 23S rRNA. The protein is Ribosomal RNA large subunit methyltransferase G of Streptomyces griseus subsp. griseus (strain JCM 4626 / CBS 651.72 / NBRC 13350 / KCC S-0626 / ISP 5235).